We begin with the raw amino-acid sequence, 200 residues long: Coiled-coil domain-containing protein 28B (200 aa).

M1 is modified (N-acetylmethionine). Basic residues predominate over residues 1–10; it reads MEDKKKKRSP. The interval 1–49 is disordered; it reads MEDKKKKRSPKPCLTQPAQAPGTLRRVPVPTSHSGSLALGLPHLPSPKQ. Phosphoserine occurs at positions 46 and 115. The segment covering 140–152 has biased composition (acidic residues); it reads GEEEDEEEEEDGV. The interval 140-165 is disordered; sequence GEEEDEEEEEDGVTEGLPEEQKKTMA. Positions 158-189 form a coiled coil; the sequence is EEQKKTMADRNLDQLLSNLEDLSNSIQKLHLA.

Interacts with BBS1, BBS2, BBS4, BBS5, BBS6, BBS7 and TTC8/BBS8. Interacts with MAPKAP1/SIN1 isoform 1 and RICTOR. As to expression, expressed in the retina, pericardium and limb epithelium.

It localises to the cytoplasm. Its subcellular location is the cytoskeleton. The protein localises to the microtubule organizing center. It is found in the centrosome. Involved in ciliogenesis. Regulates cilia length through its interaction with MAPKAP1/SIN1 but independently of mTORC2 complex. Modulates mTORC2 complex assembly and function, possibly enhances AKT1 phosphorylation. Does not seem to modulate assembly and function of mTORC1 complex. The polypeptide is Coiled-coil domain-containing protein 28B (Ccdc28b) (Mus musculus (Mouse)).